We begin with the raw amino-acid sequence, 703 residues long: Centrosomal protein of 63 kDa (703 aa).

Met1 carries the post-translational modification N-acetylmethionine. Coiled coils occupy residues 22–199 (EAEL…ESVE), 242–306 (MTVL…QHAV), 353–533 (LEGS…STQM), and 676–703 (HILERLDAHIEELKRESEKTVRQFTALK). Ser278 is subject to Phosphoserine.

The protein belongs to the CEP63 family. As to quaternary structure, interacts with CEP152 and CDK1; these interactions recruit both ligands to centrosomes. Interacts with CDK2, CDK5RAP2, WDR62, CEP90, KIAA0753/moonraker and CCDC14. CEP63, CDK5RAP2, CEP152, WDR62 are proposed to form a stepwise assembled complex at the centrosome forming a ring near parental centrioles. Interacts with CCDC57; the interaction is required for their location to proximal end of centrioles. Interacts with FXR1; promoting its stabilization. (Microbial infection) Interacts with zika virus serine protease NS3; this interaction disorganizes the centrosome. Polyubiquitinated via 'Lys-48'-linked ubiquitin, leading to its degradation. Deubiquitinated by USP36, promoting its stabilization.

Its subcellular location is the cytoplasm. It localises to the cytoskeleton. It is found in the microtubule organizing center. The protein resides in the centrosome. The protein localises to the centriole. Its subcellular location is the centriolar satellite. Its function is as follows. Required for normal spindle assembly. Plays a key role in mother-centriole-dependent centriole duplication; the function seems also to involve CEP152, CDK5RAP2 and WDR62 through a stepwise assembled complex at the centrosome that recruits CDK2 required for centriole duplication. Reported to be required for centrosomal recruitment of CEP152; however, this function has been questioned. Also recruits CDK1 to centrosomes. Plays a role in DNA damage response. Following DNA damage, such as double-strand breaks (DSBs), is removed from centrosomes; this leads to the inactivation of spindle assembly and delay in mitotic progression. Promotes stabilization of FXR1 protein by inhibiting FXR1 ubiquitination. This chain is Centrosomal protein of 63 kDa, found in Homo sapiens (Human).